Here is a 989-residue protein sequence, read N- to C-terminus: Mediator of RNA polymerase II transcription subunit 24 (989 aa).

6 short sequence motifs (LXXLL motif) span residues 343–347 (LTPLL), 359–363 (LSLLL), 447–451 (LDLLL), 556–560 (LVALL), 787–791 (LPRLL), and 857–861 (LMRLL).

Belongs to the Mediator complex subunit 24 family. In terms of assembly, component of the Mediator complex.

The protein resides in the nucleus. Its function is as follows. Component of the Mediator complex, a coactivator involved in the regulated transcription of nearly all RNA polymerase II-dependent genes. Mediator functions as a bridge to convey information from gene-specific regulatory proteins to the basal RNA polymerase II transcription machinery. Mediator is recruited to promoters by direct interactions with regulatory proteins and serves as a scaffold for the assembly of a functional preinitiation complex with RNA polymerase II and the general transcription factors. Required for proliferation of enteric nervous system precursors. Required for the development of dopaminergic amacrine cells and rod photoreceptor cells in the retina. This is Mediator of RNA polymerase II transcription subunit 24 (med24) from Danio rerio (Zebrafish).